We begin with the raw amino-acid sequence, 555 residues long: Connector enhancer of kinase suppressor of ras 3 (555 aa).

The SAM domain maps to 7 to 72 (WSPKQVVDWT…LEAVDLLCAL (66 aa)). Residues 80–174 (NMKNLVLKLR…TAVQKDCLVA (95 aa)) enclose the CRIC domain. The region spanning 211-293 (EVHLPNVRPG…GVVLLLKKRP (83 aa)) is the PDZ domain. Disordered regions lie at residues 308 to 333 (RWKPPLVQTSPPPTTTQSPESTMDAS), 348 to 391 (PPPA…LDQE), and 518 to 538 (PFQEEGPKKKSASSSAKASSG). Residues 311–329 (PPLVQTSPPPTTTQSPEST) are compositionally biased toward low complexity. Positions 325-546 (SPESTMDASL…SGEPSLLVSW (222 aa)) constitute a DUF1170 domain. A phosphoserine mark is found at S381 and S383.

It belongs to the CNKSR family. In terms of assembly, interacts with epithelial sodium channel ENaC. Interacts directly with SCNN1A (ENaC subunit alpha) and SCNN1B (ENaC subunit beta) C-terminal tails. Interacts with ENaC regulatory proteins NEDD4L, RAF1 and SGK1.

Its subcellular location is the cytoplasm. It localises to the apical cell membrane. Its function is as follows. Involved in transepithelial sodium transport. Regulates aldosterone-induced and epithelial sodium channel (ENaC)-mediated sodium transport through regulation of ENaC cell surface expression. Acts as a scaffold protein coordinating the assembly of an ENaC-regulatory complex (ERC). The polypeptide is Connector enhancer of kinase suppressor of ras 3 (Cnksr3) (Rattus norvegicus (Rat)).